The chain runs to 615 residues: Threonine--tRNA ligase (615 aa).

Residues methionine 1–threonine 132 form an editing domain region. A catalytic region spans residues proline 196–proline 495. Residues cysteine 288, histidine 340, and histidine 464 each coordinate Zn(2+).

Belongs to the class-II aminoacyl-tRNA synthetase family. As to quaternary structure, homodimer. Zn(2+) is required as a cofactor.

It is found in the cytoplasm. The enzyme catalyses tRNA(Thr) + L-threonine + ATP = L-threonyl-tRNA(Thr) + AMP + diphosphate + H(+). Functionally, catalyzes the attachment of threonine to tRNA(Thr) in a two-step reaction: L-threonine is first activated by ATP to form Thr-AMP and then transferred to the acceptor end of tRNA(Thr). Also edits incorrectly charged L-seryl-tRNA(Thr). The sequence is that of Threonine--tRNA ligase (thrS) from Cenarchaeum symbiosum (strain A).